The sequence spans 350 residues: Inactive ADP-ribosyltransferase arh2 (350 aa).

This sequence belongs to the ADP-ribosylglycohydrolase family.

The protein resides in the cytoplasm. Its subcellular location is the myofibril. The protein localises to the sarcomere. Required for myofibril assembly and outgrowth of the cardiac chambers in the developing heart. Appears to be catalytically inactive, showing no activity against O-acetyl-ADP-ribose. The polypeptide is Inactive ADP-ribosyltransferase arh2 (adprhl1) (Danio rerio (Zebrafish)).